A 226-amino-acid chain; its full sequence is Ornithine decarboxylase antizyme (226 aa).

This sequence belongs to the ODC antizyme family. Interacts with ODC and thereby sterically blocks ODC homodimerization.

Ornithine decarboxylase (ODC) antizyme protein that negatively regulates ODC activity and intracellular polyamine biosynthesis in response to increased intracellular polyamine levels. Binds to ODC monomers, inhibiting the assembly of the functional ODC homodimer, and targets the monomers for ubiquitin-independent proteolytic destruction by the 26S proteasome. This chain is Ornithine decarboxylase antizyme (spa1), found in Schizosaccharomyces pombe (strain 972 / ATCC 24843) (Fission yeast).